A 64-amino-acid polypeptide reads, in one-letter code: Long neurotoxin MS5 (64 aa).

Disulfide bonds link Cys-3/Cys-24, Cys-6/Cys-11, Cys-17/Cys-41, Cys-45/Cys-57, and Cys-58/Cys-63.

The protein belongs to the three-finger toxin family. Ancestral subfamily. In terms of tissue distribution, expressed by the venom gland.

The protein localises to the secreted. Functionally, produces peripheral paralysis by blocking neuromuscular transmission at the postsynaptic site. Very weak inhibitor of the endogenous nicotinic acetylcholine receptors (nAChR) in the human rhabdomyosarcoma TE 671 cell line. This neurotoxin is lethal to zebrafish by injection at the back of the dorsolateral region, but is not toxic to mice by intraperitoneal injection. The sequence is that of Long neurotoxin MS5 from Micrurus surinamensis (Surinam coral snake).